The sequence spans 546 residues: Chaperonin GroEL (546 aa).

ATP is bound by residues 30–33 (TLGP), Lys51, 87–91 (DGTTT), Gly415, 479–481 (NAA), and Asp495.

This sequence belongs to the chaperonin (HSP60) family. Forms a cylinder of 14 subunits composed of two heptameric rings stacked back-to-back. Interacts with the co-chaperonin GroES.

Its subcellular location is the cytoplasm. It catalyses the reaction ATP + H2O + a folded polypeptide = ADP + phosphate + an unfolded polypeptide.. Its function is as follows. Together with its co-chaperonin GroES, plays an essential role in assisting protein folding. The GroEL-GroES system forms a nano-cage that allows encapsulation of the non-native substrate proteins and provides a physical environment optimized to promote and accelerate protein folding. The protein is Chaperonin GroEL of Allochromatium vinosum (Chromatium vinosum).